The chain runs to 1415 residues: DNA-directed RNA polymerase subunit beta' (1415 aa).

Positions 70, 72, 85, and 88 each coordinate Zn(2+). Asp461, Asp463, and Asp465 together coordinate Mg(2+). Cys820, Cys894, Cys901, and Cys904 together coordinate Zn(2+).

The protein belongs to the RNA polymerase beta' chain family. In terms of assembly, the RNAP catalytic core consists of 2 alpha, 1 beta, 1 beta' and 1 omega subunit. When a sigma factor is associated with the core the holoenzyme is formed, which can initiate transcription. It depends on Mg(2+) as a cofactor. The cofactor is Zn(2+).

It catalyses the reaction RNA(n) + a ribonucleoside 5'-triphosphate = RNA(n+1) + diphosphate. Functionally, DNA-dependent RNA polymerase catalyzes the transcription of DNA into RNA using the four ribonucleoside triphosphates as substrates. The polypeptide is DNA-directed RNA polymerase subunit beta' (Cupriavidus necator (strain ATCC 17699 / DSM 428 / KCTC 22496 / NCIMB 10442 / H16 / Stanier 337) (Ralstonia eutropha)).